Reading from the N-terminus, the 56-residue chain is Small ribosomal subunit protein uS14 (56 aa).

Phosphoserine is present on Ser9. Arg12 is modified (omega-N-methylarginine). Residues Cys21, Cys24, Cys39, and Cys42 each coordinate Zn(2+). Lys48 bears the N6-acetyllysine mark.

This sequence belongs to the universal ribosomal protein uS14 family. Component of the 40S small ribosomal subunit. The cofactor is Zn(2+).

It is found in the cytoplasm. The protein resides in the cytosol. The protein localises to the rough endoplasmic reticulum. Component of the small ribosomal subunit. The ribosome is a large ribonucleoprotein complex responsible for the synthesis of proteins in the cell. This is Small ribosomal subunit protein uS14 (Rps29) from Mus musculus (Mouse).